We begin with the raw amino-acid sequence, 501 residues long: MEALLQLKGIDKAFPGVKALSGAALNVYPGRVMALVGENGAGKSTMMKVLTGIYTRDAGTLLWLGKETTFTGPKSSQEAGIGIIHQELNLIPQLTIAENIFLGREFVNRFGKIDWKTMYAEADKLLAKLNLRFKSDKLVGDLSIGDQQMVEIAKVLSFESKVIIMDEPTDALTDTETESLFRVIRELKLQGRGIVYISHRMKEIFEICDDVTVFRDGQFIAEREVASLTEDSLIEMMVGRKLEDQYPHLDKAPGDIRLKVDNLCGPGVNDVSFTLRKGEILGVSGLMGAGRTELMKVLYGALPRTSGYVTLDGHEVVTRSPQDGLANGIVYISEDRKRDGLVLGMSVKENMSLTALRYFSRAGGSLKHADEQQAVSDFIRLFNVKTPSMEQAIGLLSGGNQQKVAIARGLMTRPKVLILDEPTRGVDVGAKKEIYQLINQFKADGLSIILVSSEMPEVLGMSDRIIVMHEGHLSGEFTREQATQEVLMAAAVGKLNRVNQE.

ABC transporter domains lie at 5 to 241 (LQLK…VGRK) and 252 to 495 (APGD…VGKL). 37–44 (GENGAGKS) serves as a coordination point for ATP.

This sequence belongs to the ABC transporter superfamily. Ribose importer (TC 3.A.1.2.1) family. The complex is composed of an ATP-binding protein (RbsA), two transmembrane proteins (RbsC) and a solute-binding protein (RbsB).

It is found in the cell inner membrane. The enzyme catalyses D-ribose(out) + ATP + H2O = D-ribose(in) + ADP + phosphate + H(+). Its function is as follows. Part of the ABC transporter complex RbsABC involved in ribose import. Responsible for energy coupling to the transport system. The sequence is that of Ribose import ATP-binding protein RbsA from Escherichia coli O6:H1 (strain CFT073 / ATCC 700928 / UPEC).